A 407-amino-acid chain; its full sequence is Phosphonoacetate hydrolase (407 aa).

Residues D25, T64, D202, H206, D241, H242, and H368 each contribute to the Zn(2+) site. Substrate contacts are provided by T64 and D202. H242 and H368 together coordinate substrate.

Belongs to the alkaline phosphatase family. PhnA subfamily. As to quaternary structure, homodimer. Requires Zn(2+) as cofactor.

The enzyme catalyses phosphonoacetate + H2O = acetate + phosphate + H(+). Completely inhibited by EDTA and 1,10-phenanthroline. Moderately inhibited by the phosphonocarboxylic acids phosphonoformate and 3-phosphonopropionate and the phosphonate herbicide glyphosate. Partially inhibited by the reducing agents sodium sulfide and dithiotheitol and the chelating agent iminodiacetate. Nonphosphonate analogs of phosphonoacetate, such as arsonoacetate, sulfonoacetate and malonate are poor inhibitors. Inorganic phosphate, acetate and the known phosphonotase inhibitor phosphite have little effect on activity. Not inhibited by the alkylphosphonic acids methylphosphonate and ethylphosphonate, or the aminoalkylphosphonates 2-aminoethylphosphonate, 3-aminopropylphosphonate and 4-aminobutylphosphonate. Fe(3+), Ca(2+), Mg(2+) and Cs(+) have no effect on activity. Activity is slightly increased by the aminoalkylphosphonates 1-aminoethylphosphonate, 1-aminobutylphosphonate, 2-amino-4-butylphosphonate. Activity is increased by Zn(2+), Mn(2+) and Co(2+), these 3 metal ions also allow recovery of activity after EDTA treatment. Its function is as follows. Specifically hydrolyzes phosphonoacetate. Does not have activity on other organophosphonates or acetates. The polypeptide is Phosphonoacetate hydrolase (Pseudomonas fluorescens).